We begin with the raw amino-acid sequence, 136 residues long: Large ribosomal subunit protein eL27B (136 aa).

Belongs to the eukaryotic ribosomal protein eL27 family. In terms of assembly, component of the large ribosomal subunit (LSU). Mature yeast ribosomes consist of a small (40S) and a large (60S) subunit. The 40S small subunit contains 1 molecule of ribosomal RNA (18S rRNA) and at least 33 different proteins. The large 60S subunit contains 3 rRNA molecules (25S, 5.8S and 5S rRNA) and at least 46 different proteins.

Its subcellular location is the cytoplasm. Component of the ribosome, a large ribonucleoprotein complex responsible for the synthesis of proteins in the cell. The small ribosomal subunit (SSU) binds messenger RNAs (mRNAs) and translates the encoded message by selecting cognate aminoacyl-transfer RNA (tRNA) molecules. The large subunit (LSU) contains the ribosomal catalytic site termed the peptidyl transferase center (PTC), which catalyzes the formation of peptide bonds, thereby polymerizing the amino acids delivered by tRNAs into a polypeptide chain. The nascent polypeptides leave the ribosome through a tunnel in the LSU and interact with protein factors that function in enzymatic processing, targeting, and the membrane insertion of nascent chains at the exit of the ribosomal tunnel. The chain is Large ribosomal subunit protein eL27B (rpl2702) from Schizosaccharomyces pombe (strain 972 / ATCC 24843) (Fission yeast).